A 378-amino-acid chain; its full sequence is UDP-N-acetylglucosamine--N-acetylmuramyl-(pentapeptide) pyrophosphoryl-undecaprenol N-acetylglucosamine transferase (378 aa).

UDP-N-acetyl-alpha-D-glucosamine-binding positions include 13-15, Asn124, Arg165, Ser193, and Gln294; that span reads TGG.

The protein belongs to the glycosyltransferase 28 family. MurG subfamily.

It localises to the cell inner membrane. The catalysed reaction is di-trans,octa-cis-undecaprenyl diphospho-N-acetyl-alpha-D-muramoyl-L-alanyl-D-glutamyl-meso-2,6-diaminopimeloyl-D-alanyl-D-alanine + UDP-N-acetyl-alpha-D-glucosamine = di-trans,octa-cis-undecaprenyl diphospho-[N-acetyl-alpha-D-glucosaminyl-(1-&gt;4)]-N-acetyl-alpha-D-muramoyl-L-alanyl-D-glutamyl-meso-2,6-diaminopimeloyl-D-alanyl-D-alanine + UDP + H(+). The protein operates within cell wall biogenesis; peptidoglycan biosynthesis. Its function is as follows. Cell wall formation. Catalyzes the transfer of a GlcNAc subunit on undecaprenyl-pyrophosphoryl-MurNAc-pentapeptide (lipid intermediate I) to form undecaprenyl-pyrophosphoryl-MurNAc-(pentapeptide)GlcNAc (lipid intermediate II). The polypeptide is UDP-N-acetylglucosamine--N-acetylmuramyl-(pentapeptide) pyrophosphoryl-undecaprenol N-acetylglucosamine transferase (Agrobacterium fabrum (strain C58 / ATCC 33970) (Agrobacterium tumefaciens (strain C58))).